A 367-amino-acid polypeptide reads, in one-letter code: tRNA/tmRNA (uracil-C(5))-methyltransferase (367 aa).

5 residues coordinate S-adenosyl-L-methionine: Gln-189, Tyr-217, Asn-222, Glu-238, and Asp-298. Residue Cys-323 is the Nucleophile of the active site. Catalysis depends on Glu-357, which acts as the Proton acceptor.

The protein belongs to the class I-like SAM-binding methyltransferase superfamily. RNA M5U methyltransferase family. TrmA subfamily.

It catalyses the reaction uridine(54) in tRNA + S-adenosyl-L-methionine = 5-methyluridine(54) in tRNA + S-adenosyl-L-homocysteine + H(+). It carries out the reaction uridine(341) in tmRNA + S-adenosyl-L-methionine = 5-methyluridine(341) in tmRNA + S-adenosyl-L-homocysteine + H(+). In terms of biological role, dual-specificity methyltransferase that catalyzes the formation of 5-methyluridine at position 54 (m5U54) in all tRNAs, and that of position 341 (m5U341) in tmRNA (transfer-mRNA). The protein is tRNA/tmRNA (uracil-C(5))-methyltransferase of Pseudoalteromonas translucida (strain TAC 125).